The sequence spans 258 residues: Ribosomal RNA small subunit methyltransferase A (258 aa).

Residues His-13, Leu-15, Gly-40, Glu-61, Asp-86, and Asn-106 each coordinate S-adenosyl-L-methionine.

This sequence belongs to the class I-like SAM-binding methyltransferase superfamily. rRNA adenine N(6)-methyltransferase family. RsmA subfamily.

The protein localises to the cytoplasm. It catalyses the reaction adenosine(1518)/adenosine(1519) in 16S rRNA + 4 S-adenosyl-L-methionine = N(6)-dimethyladenosine(1518)/N(6)-dimethyladenosine(1519) in 16S rRNA + 4 S-adenosyl-L-homocysteine + 4 H(+). Specifically dimethylates two adjacent adenosines (A1518 and A1519) in the loop of a conserved hairpin near the 3'-end of 16S rRNA in the 30S particle. May play a critical role in biogenesis of 30S subunits. The protein is Ribosomal RNA small subunit methyltransferase A of Coxiella burnetii (strain CbuG_Q212) (Coxiella burnetii (strain Q212)).